The primary structure comprises 165 residues: Selenoprotein F (165 aa).

A signal peptide spans 1-31 (MVAMAAGPSGCLVPAFGLRLLLATVLQAVSA). Position 96 (U96) is a non-standard amino acid, selenocysteine.

As to quaternary structure, forms a tight complex with UGGT1/UGCGL1. Interacts with UGGT2/UGCGL2. Interacts with RDH11. The N-terminus is blocked. Higher levels in prostate and thyroid gland.

Its subcellular location is the endoplasmic reticulum lumen. Its function is as follows. May be involved in redox reactions associated with the formation of disulfide bonds. May contribute to the quality control of protein folding in the endoplasmic reticulum. May regulate protein folding by enhancing the catalytic activity of UGGT1/UGCGL1 and UGGT2/UGCGL2. The polypeptide is Selenoprotein F (Homo sapiens (Human)).